The following is a 120-amino-acid chain: Small ribosomal subunit protein uS10 (120 aa).

Phosphoserine occurs at positions 16 and 18.

This sequence belongs to the universal ribosomal protein uS10 family. As to expression, expressed ubiquitously in embryos, highest expression is in the midgut.

In Drosophila melanogaster (Fruit fly), this protein is Small ribosomal subunit protein uS10 (RpS20).